The following is a 518-amino-acid chain: Maturase K (518 aa).

This sequence belongs to the intron maturase 2 family. MatK subfamily.

The protein resides in the plastid. The protein localises to the chloroplast. In terms of biological role, usually encoded in the trnK tRNA gene intron. Probably assists in splicing its own and other chloroplast group II introns. This Syzygium cumini (Java plum) protein is Maturase K.